A 245-amino-acid polypeptide reads, in one-letter code: 2,3-bisphosphoglycerate-dependent phosphoglycerate mutase (245 aa).

Substrate contacts are provided by residues 8–15, 21–22, R60, 87–90, K98, 114–115, and 183–184; these read RHGQSLWN, TG, ERHY, RR, and GN. The Tele-phosphohistidine intermediate role is filled by H9. The active-site Proton donor/acceptor is E87.

The protein belongs to the phosphoglycerate mutase family. BPG-dependent PGAM subfamily.

The enzyme catalyses (2R)-2-phosphoglycerate = (2R)-3-phosphoglycerate. It functions in the pathway carbohydrate degradation; glycolysis; pyruvate from D-glyceraldehyde 3-phosphate: step 3/5. Its function is as follows. Catalyzes the interconversion of 2-phosphoglycerate and 3-phosphoglycerate. The polypeptide is 2,3-bisphosphoglycerate-dependent phosphoglycerate mutase (Bacillus mycoides (strain KBAB4) (Bacillus weihenstephanensis)).